We begin with the raw amino-acid sequence, 109 residues long: Parvalbumin beta (109 aa).

Ala-2 carries the post-translational modification N-acetylalanine. The tract at residues 22–41 (AGSFDHKKFFKACGLSGKST) is igE-binding. 2 consecutive EF-hand domains span residues 39–74 (KSTD…FKAG) and 78–109 (LSDA…MIKG). Ca(2+) contacts are provided by Asp-52, Asp-54, Ser-56, Phe-58, Glu-60, Glu-63, Asp-91, Asp-93, Asp-95, Lys-97, and Glu-102.

Belongs to the parvalbumin family. Post-translationally, the N-terminus is blocked. Expressed in both white and dark muscles (at protein level). About eight and a half times lower expression in the dark muscle than in the white muscle (at protein level).

In muscle, parvalbumin is thought to be involved in relaxation after contraction. It binds two calcium ions. The polypeptide is Parvalbumin beta (Scomber japonicus (Chub mackerel)).